Consider the following 316-residue polypeptide: tRNA dimethylallyltransferase (316 aa).

Position 17 to 24 (17 to 24 (GPTASGKT)) interacts with ATP. 19–24 (TASGKT) is a binding site for substrate. Interaction with substrate tRNA regions lie at residues 42–45 (DSAL), 166–170 (QRLSR), 247–252 (RCVGYR), and 280–287 (KRQITWLR).

Belongs to the IPP transferase family. Monomer. The cofactor is Mg(2+).

The enzyme catalyses adenosine(37) in tRNA + dimethylallyl diphosphate = N(6)-dimethylallyladenosine(37) in tRNA + diphosphate. Functionally, catalyzes the transfer of a dimethylallyl group onto the adenine at position 37 in tRNAs that read codons beginning with uridine, leading to the formation of N6-(dimethylallyl)adenosine (i(6)A). This is tRNA dimethylallyltransferase from Escherichia coli O6:K15:H31 (strain 536 / UPEC).